A 302-amino-acid polypeptide reads, in one-letter code: Acidic endochitinase (302 aa).

The N-terminal stretch at 1–30 is a signal peptide; the sequence is MTNMTLRKHVIYFLFFISCSLSKPSDASRG. A GH18 domain is found at 31-302; the sequence is GIAIYWGQNG…GYSSSILASV (272 aa). Intrachain disulfides connect Cys49–Cys96 and Cys79–Cys86. Residue Glu156 is the Proton donor of the active site. Cys188 and Cys217 are oxidised to a cystine.

This sequence belongs to the glycosyl hydrolase 18 family. Chitinase class III subfamily.

The protein localises to the secreted. It localises to the extracellular space. The catalysed reaction is Random endo-hydrolysis of N-acetyl-beta-D-glucosaminide (1-&gt;4)-beta-linkages in chitin and chitodextrins.. Functionally, this protein functions as a defense against chitin containing fungal pathogens. This chain is Acidic endochitinase (CHIB1), found in Arabidopsis thaliana (Mouse-ear cress).